A 338-amino-acid polypeptide reads, in one-letter code: Lipoate-protein ligase A (338 aa).

The BPL/LPL catalytic domain occupies P29–V216. Residues R71, G76–F79, and K134 contribute to the ATP site. (R)-lipoate is bound at residue K134.

This sequence belongs to the LplA family. In terms of assembly, monomer.

It is found in the cytoplasm. It catalyses the reaction L-lysyl-[lipoyl-carrier protein] + (R)-lipoate + ATP = N(6)-[(R)-lipoyl]-L-lysyl-[lipoyl-carrier protein] + AMP + diphosphate + H(+). Its pathway is protein modification; protein lipoylation via exogenous pathway; protein N(6)-(lipoyl)lysine from lipoate: step 1/2. It participates in protein modification; protein lipoylation via exogenous pathway; protein N(6)-(lipoyl)lysine from lipoate: step 2/2. In terms of biological role, catalyzes both the ATP-dependent activation of exogenously supplied lipoate to lipoyl-AMP and the transfer of the activated lipoyl onto the lipoyl domains of lipoate-dependent enzymes. The protein is Lipoate-protein ligase A of Salmonella agona (strain SL483).